A 318-amino-acid polypeptide reads, in one-letter code: Pantothenate kinase (318 aa).

ATP is bound at residue Gly96 to Ser103.

This sequence belongs to the prokaryotic pantothenate kinase family.

It is found in the cytoplasm. The enzyme catalyses (R)-pantothenate + ATP = (R)-4'-phosphopantothenate + ADP + H(+). The protein operates within cofactor biosynthesis; coenzyme A biosynthesis; CoA from (R)-pantothenate: step 1/5. The chain is Pantothenate kinase from Rhodopseudomonas palustris (strain ATCC BAA-98 / CGA009).